The following is a 756-amino-acid chain: U3 small nucleolar RNA-associated protein 25 homolog (756 aa).

The segment at 1–159 (MGKRGSRSQS…SQTSPEEFTD (159 aa)) is disordered. Promotes p53/TP53 degradation regions lie at residues 1–185 (MGKR…SLKA) and 573–635 (VQLP…KKEE). At serine 10 the chain carries Phosphoserine. Basic and acidic residues predominate over residues 25 to 43 (RDFGEEHPFYDRVSRKEAK). Phosphoserine is present on residues serine 50, serine 52, serine 58, serine 60, serine 62, and serine 64. Composition is skewed to acidic residues over residues 54–64 (DSSDSESDSES) and 84–121 (EEEE…EEMA). The segment at 636–697 (LNFTHICEYT…YELPTYPHFY (62 aa)) is represses p53/TP53 degradation.

Belongs to the UTP25 family. As to quaternary structure, interacts with CAPN3; the interaction is required for CAPN3 translocation to the nucleolus. Post-translationally, phosphorylated. Phosphorylation is required to promote p53/TP53 degradation in the nucleolus which promotes cell cycle progression and liver development. As to expression, expressed in colon.

Its subcellular location is the nucleus. It localises to the nucleolus. Its function is as follows. Component of the ribosomal small subunit processome for the biogenesis of ribosomes, functions in pre-ribosomal RNA (pre-rRNA) processing. Essential for embryonic development in part through the regulation of p53 pathway. Controls the expansion growth of digestive organs and liver. Also involved in the sympathetic neuronal development. Mediates, with CAPN3, the proteasome-independent degradation of p53/TP53. This is U3 small nucleolar RNA-associated protein 25 homolog from Homo sapiens (Human).